A 231-amino-acid chain; its full sequence is Thiamine import ATP-binding protein ThiQ (231 aa).

An ABC transporter domain is found at 2–230 (LHLDRLLIRQ…PPPALRAYLG (229 aa)). 32 to 39 (GPSGGGKS) lines the ATP pocket.

The protein belongs to the ABC transporter superfamily. Thiamine importer (TC 3.A.1.19.1) family. In terms of assembly, the complex is composed of two ATP-binding proteins (ThiQ), two transmembrane proteins (ThiP) and a solute-binding protein (ThiB).

The protein localises to the cell inner membrane. It carries out the reaction thiamine(out) + ATP + H2O = thiamine(in) + ADP + phosphate + H(+). Functionally, part of the ABC transporter complex ThiBPQ involved in thiamine import. Responsible for energy coupling to the transport system. The polypeptide is Thiamine import ATP-binding protein ThiQ (Cereibacter sphaeroides (strain ATCC 17023 / DSM 158 / JCM 6121 / CCUG 31486 / LMG 2827 / NBRC 12203 / NCIMB 8253 / ATH 2.4.1.) (Rhodobacter sphaeroides)).